Reading from the N-terminus, the 397-residue chain is 8-amino-7-oxononanoate synthase (397 aa).

R23 is a binding site for substrate. 110 to 111 (GY) serves as a coordination point for pyridoxal 5'-phosphate. H135 serves as a coordination point for substrate. S181, H209, and T237 together coordinate pyridoxal 5'-phosphate. N6-(pyridoxal phosphate)lysine is present on K240. T354 contributes to the substrate binding site.

The protein belongs to the class-II pyridoxal-phosphate-dependent aminotransferase family. BioF subfamily. In terms of assembly, homodimer. It depends on pyridoxal 5'-phosphate as a cofactor.

The enzyme catalyses 6-carboxyhexanoyl-[ACP] + L-alanine + H(+) = (8S)-8-amino-7-oxononanoate + holo-[ACP] + CO2. It participates in cofactor biosynthesis; biotin biosynthesis. In terms of biological role, catalyzes the decarboxylative condensation of pimeloyl-[acyl-carrier protein] and L-alanine to produce 8-amino-7-oxononanoate (AON), [acyl-carrier protein], and carbon dioxide. The protein is 8-amino-7-oxononanoate synthase of Anaeromyxobacter dehalogenans (strain 2CP-C).